We begin with the raw amino-acid sequence, 644 residues long: Exoribonuclease 2 (644 aa).

The 328-residue stretch at 189-516 folds into the RNB domain; that stretch reads RQDLTALNFV…NHRLLKAVIK (328 aa). The S1 motif domain occupies 561 to 643; the sequence is NTRFAAEIID…ETRSIIARPA (83 aa).

The protein belongs to the RNR ribonuclease family. RNase II subfamily.

It localises to the cytoplasm. The catalysed reaction is Exonucleolytic cleavage in the 3'- to 5'-direction to yield nucleoside 5'-phosphates.. Its function is as follows. Involved in mRNA degradation. Hydrolyzes single-stranded polyribonucleotides processively in the 3' to 5' direction. The polypeptide is Exoribonuclease 2 (Salmonella choleraesuis (strain SC-B67)).